The primary structure comprises 191 residues: Acireductone dioxygenase 2 (191 aa).

The Fe(2+) site is built by histidine 102, histidine 104, glutamate 108, and histidine 146. Ni(2+)-binding residues include histidine 102, histidine 104, glutamate 108, and histidine 146.

It belongs to the acireductone dioxygenase (ARD) family. As to quaternary structure, monomer. It depends on Fe(2+) as a cofactor. Ni(2+) serves as cofactor.

The catalysed reaction is 1,2-dihydroxy-5-(methylsulfanyl)pent-1-en-3-one + O2 = 3-(methylsulfanyl)propanoate + CO + formate + 2 H(+). It carries out the reaction 1,2-dihydroxy-5-(methylsulfanyl)pent-1-en-3-one + O2 = 4-methylsulfanyl-2-oxobutanoate + formate + 2 H(+). It functions in the pathway amino-acid biosynthesis; L-methionine biosynthesis via salvage pathway; L-methionine from S-methyl-5-thio-alpha-D-ribose 1-phosphate: step 5/6. Functionally, catalyzes 2 different reactions between oxygen and the acireductone 1,2-dihydroxy-3-keto-5-methylthiopentene (DHK-MTPene) depending upon the metal bound in the active site. Fe-containing acireductone dioxygenase (Fe-ARD) produces formate and 2-keto-4-methylthiobutyrate (KMTB), the alpha-ketoacid precursor of methionine in the methionine recycle pathway. Ni-containing acireductone dioxygenase (Ni-ARD) produces methylthiopropionate, carbon monoxide and formate, and does not lie on the methionine recycle pathway. The sequence is that of Acireductone dioxygenase 2 from Nocardia farcinica (strain IFM 10152).